A 55-amino-acid polypeptide reads, in one-letter code: Accessory gland-specific peptide 70A (55 aa).

An N-terminal signal peptide occupies residues M1–S19. The interval W20–I33 is essential for binding to sperm. Hydroxyproline occurs at positions 28 and 32. I33 carries the isoleucine derivative modification. P34, P36, and P38 each carry hydroxyproline. Residues P36–C55 are sufficient to induce PMR. An intrachain disulfide couples C43 to C55.

Belongs to the Drosophila sex peptide family. In terms of processing, sperm-bound protein is cleaved to release an active C-terminal peptide. Gradual release from stored sperm may function to prolong PMR and enhance male reproductive success. Main cells of the accessory glands of males (paragonial gland).

The protein resides in the secreted. Male seminal protein which triggers short- and long-term post-mating behavioral responses (PMR) in female Drosophila. Binds initially to sperm where it is later cleaved to release an active peptide within the female reproductive tract. Signals via the sex peptide receptor (SPR) in female flies; may also act via other receptors. Moderates the activity of distinct neuronal circuitries in the female genital tract to promote specific PMRs including: enhanced ovulation, increased egg laying rate, increased feeding/foraging rate, induced antimicrobial peptide synthesis, reduced mating receptivity, reduced day-time sleep and reduced lifespan in multiple mated females. The sequence is that of Accessory gland-specific peptide 70A (SP) from Drosophila melanogaster (Fruit fly).